Consider the following 146-residue polypeptide: Large ribosomal subunit protein uL15 (146 aa).

Basic and acidic residues predominate over residues 1–18; that stretch reads MKLHELKPTPGSRHERNR. The segment at 1 to 69 is disordered; the sequence is MKLHELKPTP…RLPKRGFNNP (69 aa). Gly residues predominate over residues 42–52; the sequence is SGGGVRPGFEG.

Belongs to the universal ribosomal protein uL15 family. Part of the 50S ribosomal subunit.

Functionally, binds to the 23S rRNA. In Exiguobacterium sp. (strain ATCC BAA-1283 / AT1b), this protein is Large ribosomal subunit protein uL15.